The following is a 60-amino-acid chain: MGIVDIAREYIVAWRRILTLARKPDEEEYSLLLKLNLLGFALVGGIGYLIHLGYIILTSG.

Residues 37–57 (LLGFALVGGIGYLIHLGYIIL) traverse the membrane as a helical segment.

It belongs to the SecE/SEC61-gamma family. As to quaternary structure, component of the Sec protein translocase complex. Heterotrimer consisting of SecY (alpha), SecG (beta) and SecE (gamma) subunits. The heterotrimers can form oligomers, although 1 heterotrimer is thought to be able to translocate proteins. Interacts with the ribosome. May interact with SecDF, and other proteins may be involved.

It localises to the cell membrane. In terms of biological role, essential subunit of the Sec protein translocation channel SecYEG. Clamps together the 2 halves of SecY. May contact the channel plug during translocation. This is Protein translocase subunit SecE from Aeropyrum pernix (strain ATCC 700893 / DSM 11879 / JCM 9820 / NBRC 100138 / K1).